We begin with the raw amino-acid sequence, 319 residues long: HPr kinase/phosphorylase (319 aa).

Active-site residues include histidine 140 and lysine 161. ATP is bound at residue 155 to 162; it reads GDSGVGKS. Serine 162 is a Mg(2+) binding site. Aspartate 179 serves as the catalytic Proton acceptor; for phosphorylation activity. Proton donor; for dephosphorylation activity. An important for the catalytic mechanism of both phosphorylation and dephosphorylation region spans residues 203 to 212; sequence LEIRGLGIID. Glutamate 204 contributes to the Mg(2+) binding site. The active site involves arginine 245. The interval 266 to 271 is important for the catalytic mechanism of dephosphorylation; that stretch reads PVKVGR.

This sequence belongs to the HPrK/P family. Homohexamer, arranged as bilayered trimers. Six HPr molecules bind to the hexamer at sites that overlap two of its subunits. The cofactor is Mg(2+).

It catalyses the reaction [HPr protein]-L-serine + ATP = [HPr protein]-O-phospho-L-serine + ADP + H(+). The catalysed reaction is [HPr protein]-O-phospho-L-serine + phosphate + H(+) = [HPr protein]-L-serine + diphosphate. With respect to regulation, kinase activity is slightly activated by fructose 1,6-bisphosphate (FBP), and inhibited by inorganic phosphate (Pi), but FBP prevents kinase inhibition by Pi. Dephosphorylation of P-Ser-HPr is slightly inhibited by FBP. Its function is as follows. Catalyzes the ATP- as well as the pyrophosphate-dependent phosphorylation of 'Ser-46' in HPr, a phosphocarrier protein of the phosphoenolpyruvate-dependent sugar phosphotransferase system (PTS). HprK/P also catalyzes the pyrophosphate-producing, inorganic phosphate-dependent dephosphorylation (phosphorolysis) of seryl-phosphorylated HPr (P-Ser-HPr). The two antagonistic activities of HprK/P are regulated by several intracellular metabolites, which change their concentration in response to the absence or presence of rapidly metabolisable carbon sources (glucose, fructose, etc.) in the growth medium. Therefore, by controlling the phosphorylation state of HPr, HPrK/P is a sensor enzyme that plays a major role in the regulation of carbon metabolism and sugar transport: it mediates carbon catabolite repression (CCR), and regulates PTS-catalyzed carbohydrate uptake and inducer exclusion. The chain is HPr kinase/phosphorylase (hprK) from Lacticaseibacillus casei (Lactobacillus casei).